The following is a 377-amino-acid chain: T-protein (377 aa).

Residues 1–92 (MSFMEALKDL…ESYANENQFG (92 aa)) enclose the Chorismate mutase domain. Residues 101-364 (HKIVIVGGYG…DYSEQFLKES (264 aa)) form the Prephenate/arogenate dehydrogenase domain.

This sequence in the C-terminal section; belongs to the prephenate/arogenate dehydrogenase family.

It localises to the cytoplasm. The enzyme catalyses chorismate = prephenate. It catalyses the reaction prephenate + NAD(+) = 3-(4-hydroxyphenyl)pyruvate + CO2 + NADH. It participates in amino-acid biosynthesis; L-tyrosine biosynthesis; (4-hydroxyphenyl)pyruvate from prephenate (NAD(+) route): step 1/1. The protein operates within metabolic intermediate biosynthesis; prephenate biosynthesis; prephenate from chorismate: step 1/1. The protein is T-protein (tyrA) of Haemophilus influenzae (strain ATCC 51907 / DSM 11121 / KW20 / Rd).